The primary structure comprises 181 residues: Acireductone dioxygenase (181 aa).

Acidic residues predominate over residues 1-10 (MRAYIYDEES). The interval 1–23 (MRAYIYDEESQLSPQDEHESSQS) is disordered. The Fe(2+) site is built by H82, H84, E88, and H128. Ni(2+)-binding residues include H82, H84, E88, and H128.

Belongs to the acireductone dioxygenase (ARD) family. The cofactor is Fe(2+). It depends on Ni(2+) as a cofactor.

It localises to the cytoplasm. Its subcellular location is the nucleus. The catalysed reaction is 1,2-dihydroxy-5-(methylsulfanyl)pent-1-en-3-one + O2 = 4-methylsulfanyl-2-oxobutanoate + formate + 2 H(+). It carries out the reaction 1,2-dihydroxy-5-(methylsulfanyl)pent-1-en-3-one + O2 = 3-(methylsulfanyl)propanoate + CO + formate + 2 H(+). It participates in amino-acid biosynthesis; L-methionine biosynthesis via salvage pathway; L-methionine from S-methyl-5-thio-alpha-D-ribose 1-phosphate: step 5/6. Its function is as follows. Catalyzes 2 different reactions between oxygen and the acireductone 1,2-dihydroxy-3-keto-5-methylthiopentene (DHK-MTPene) depending upon the metal bound in the active site. Fe-containing acireductone dioxygenase (Fe-ARD) produces formate and 2-keto-4-methylthiobutyrate (KMTB), the alpha-ketoacid precursor of methionine in the methionine recycle pathway. Ni-containing acireductone dioxygenase (Ni-ARD) produces methylthiopropionate, carbon monoxide and formate, and does not lie on the methionine recycle pathway. This is Acireductone dioxygenase from Puccinia graminis f. sp. tritici (strain CRL 75-36-700-3 / race SCCL) (Black stem rust fungus).